Reading from the N-terminus, the 482-residue chain is MEKDIKRQIQILEIITSEEKWFTTIEISKILRCCNKTIMKDISFIKDFLPEDWHIKIKKGKGVRIYLPYNKHRNEITFLLFRESLTFRILQHLFERETKTIATLAERLYIQVPSILPALKRVENYLKKFGLKLRKKPLRLEGDEVRIMIMYLDLYLKSYNDTEWPFEKLKKEVIFQYLGTLEESLGISLHVVSKRHLSFFIAILLKRKQQGYKVQLNRKFLYFNTETPDYVKIGRIFEKLEREFGVSLTVQDKILLTISIKSSKYVYKDINKEKEESVQYFKEGNLSIYELVKDFINSLEEKLKVDLISDEEFIFALVDYFKRTIYHLQYLCMFERPQKQTIQYMQTEHSETFSAVKEVYTEFVKKNEIADYVSVEEIAKVTMYIEASRLRYTSNYKKVLLVTGESESWAEYLAATLAKRFGDKIQISTVFFAKKSDHDVNADFIISTIPLDLGSTPIICINSIPTERDYTNIQYYLDLQDG.

PRD domains are found at residues 165–270 (PFEK…YKDI) and 283–395 (EGNL…YTSN).

Belongs to the AtxA/AcpA family.

In terms of biological role, acpB and AcpA regulate cap gene expression and capsule synthesis. This chain is Capsule synthesis positive regulator AcpB (acpB), found in Bacillus anthracis.